Here is a 402-residue protein sequence, read N- to C-terminus: Protein arginine methyltransferase NDUFAF7 homolog, mitochondrial (402 aa).

The protein belongs to the NDUFAF7 family.

It localises to the mitochondrion. It catalyses the reaction L-arginyl-[protein] + 2 S-adenosyl-L-methionine = N(omega),N(omega)'-dimethyl-L-arginyl-[protein] + 2 S-adenosyl-L-homocysteine + 2 H(+). Functionally, arginine methyltransferase involved in the assembly or stability of mitochondrial NADH:ubiquinone oxidoreductase complex (complex I). This Saccharomyces cerevisiae (strain ATCC 204508 / S288c) (Baker's yeast) protein is Protein arginine methyltransferase NDUFAF7 homolog, mitochondrial.